A 423-amino-acid polypeptide reads, in one-letter code: 3-phosphoshikimate 1-carboxyvinyltransferase (423 aa).

Residues lysine 21, serine 22, and arginine 26 each coordinate 3-phosphoshikimate. Lysine 21 is a binding site for phosphoenolpyruvate. Residues glycine 93 and arginine 123 each contribute to the phosphoenolpyruvate site. Positions 168, 169, 170, 196, 311, and 338 each coordinate 3-phosphoshikimate. Glutamine 170 serves as a coordination point for phosphoenolpyruvate. Aspartate 311 (proton acceptor) is an active-site residue. Phosphoenolpyruvate is bound by residues arginine 342, arginine 383, and lysine 408.

This sequence belongs to the EPSP synthase family. As to quaternary structure, monomer.

It is found in the cytoplasm. It catalyses the reaction 3-phosphoshikimate + phosphoenolpyruvate = 5-O-(1-carboxyvinyl)-3-phosphoshikimate + phosphate. Its pathway is metabolic intermediate biosynthesis; chorismate biosynthesis. Catalyzes the transfer of the enolpyruvyl moiety of phosphoenolpyruvate (PEP) to the 5-hydroxyl of shikimate-3-phosphate (S3P) to produce enolpyruvyl shikimate-3-phosphate and inorganic phosphate. The sequence is that of 3-phosphoshikimate 1-carboxyvinyltransferase from Methanosphaerula palustris (strain ATCC BAA-1556 / DSM 19958 / E1-9c).